The primary structure comprises 626 residues: Endo-1,3(4)-beta-glucanase xgeA (626 aa).

An N-terminal signal peptide occupies residues 1–25; sequence MSSSLMRRVGSLAASAIIFPGIAHA. The 254-residue stretch at 33–286 folds into the GH16 domain; the sequence is ESWEGEKILN…WAGGVFGDSG (254 aa). Asn61 carries N-linked (GlcNAc...) asparagine glycosylation. The active-site Nucleophile is Glu142. Glu147 acts as the Proton donor in catalysis. The span at 477 to 494 shows a compositional bias: low complexity; sequence ASTDAAAATTPAAEPHPS. The tract at residues 477–533 is disordered; that stretch reads ASTDAAAATTPAAEPHPSNAETPADSKSSADAVTAQATKTTIAVNTPNPATDSASSV. Over residues 495 to 533 the composition is skewed to polar residues; sequence NAETPADSKSSADAVTAQATKTTIAVNTPNPATDSASSV. The GPI-anchor amidated glycine moiety is linked to residue Gly603. The propeptide at 604 to 626 is removed in mature form; that stretch reads VGSKVSISASVAIAAFVMLLLVN.

The protein belongs to the glycosyl hydrolase 16 family.

It is found in the cell membrane. The enzyme catalyses Endohydrolysis of (1-&gt;3)- or (1-&gt;4)-linkages in beta-D-glucans when the glucose residue whose reducing group is involved in the linkage to be hydrolyzed is itself substituted at C-3.. In terms of biological role, mixed-linked glucanase involved in the degradation of complex natural cellulosic substrates. Active on laminarin. lichenan, soluble carboxymethyl cellulose but not on pustulan. The sequence is that of Endo-1,3(4)-beta-glucanase xgeA (xgeA) from Emericella nidulans (strain FGSC A4 / ATCC 38163 / CBS 112.46 / NRRL 194 / M139) (Aspergillus nidulans).